Here is a 355-residue protein sequence, read N- to C-terminus: Uroporphyrinogen decarboxylase (355 aa).

Residues 27 to 31 (RQAGR), D77, Y154, T209, and H328 contribute to the substrate site.

Belongs to the uroporphyrinogen decarboxylase family. In terms of assembly, homodimer.

Its subcellular location is the cytoplasm. It carries out the reaction uroporphyrinogen III + 4 H(+) = coproporphyrinogen III + 4 CO2. Its pathway is porphyrin-containing compound metabolism; protoporphyrin-IX biosynthesis; coproporphyrinogen-III from 5-aminolevulinate: step 4/4. Functionally, catalyzes the decarboxylation of four acetate groups of uroporphyrinogen-III to yield coproporphyrinogen-III. This is Uroporphyrinogen decarboxylase from Aliivibrio fischeri (strain ATCC 700601 / ES114) (Vibrio fischeri).